Consider the following 301-residue polypeptide: MKFLSFKHNDRTSYGVKVKREDAVWDLPMVFAEFGDKDFNPKTLIAGLQQNQTLDFQEQVRKAVVAAEESGRDEEFKLLFTDIDFLPPVTPPNNVIAFGRNYEDHASELNHEVDSLYVFTKAASSLTGDEATIPNHKDITEQLDYEGELGIVIGKSGEKIPRGLALDYIYGYTIINDITDRTAQSSHDQAFLSKSLTGACPMGPYIVTKDELPAPENVNIVTKVNNEIRQDGNTGEMILKIDELIEKISKYVALHPGDIIATGTPAGVGAGLQPPQFLQPGDEVKVTIDNIGTLTTYISKN.

A divalent metal cation is bound by residues glutamate 146, glutamate 148, and aspartate 177.

The protein belongs to the FAH family.

This is an uncharacterized protein from Staphylococcus epidermidis (strain ATCC 12228 / FDA PCI 1200).